Reading from the N-terminus, the 728-residue chain is Protein psiK (728 aa).

Residues 1–20 form the signal peptide; the sequence is MKKTFIFLYCVVLFISTTLA. Over 21 to 666 the chain is Extracellular; the sequence is VEMKKTQDFN…FICKTAAVVS (646 aa). 3 N-linked (GlcNAc...) asparagine glycosylation sites follow: Asn61, Asn74, and Asn104. One can recognise a PA14 domain in the interval 118-266; that stretch reads MNLDDKSNYF…YDFCGVCTGN (149 aa). N-linked (GlcNAc...) asparagine glycosylation is found at Asn272, Asn326, Asn335, Asn438, Asn543, and Asn638. A helical membrane pass occupies residues 667–687; sequence VGVAVGVAVGGAIALGVFIFA. The Cytoplasmic segment spans residues 688 to 728; that stretch reads GKKGYDYWKASQGVTMATSNANPLYESNPSGGENPIYTSPN.

The protein belongs to the prespore-cell-inducing factor family.

The protein resides in the membrane. The chain is Protein psiK (psiK) from Dictyostelium discoideum (Social amoeba).